A 355-amino-acid chain; its full sequence is D-alanine--D-alanine ligase (355 aa).

Positions 143–350 (KTIFSNLKIP…IEQLVAKLVD (208 aa)) constitute an ATP-grasp domain. 178-233 (LKKLNFPFFVKPSNSGSSLGISKVINESEILQSLEKAQKIDSRILVEEGLEVREIE) contacts ATP. D303, E317, and N319 together coordinate Mg(2+).

The protein belongs to the D-alanine--D-alanine ligase family. It depends on Mg(2+) as a cofactor. Requires Mn(2+) as cofactor.

The protein localises to the cytoplasm. The enzyme catalyses 2 D-alanine + ATP = D-alanyl-D-alanine + ADP + phosphate + H(+). It participates in cell wall biogenesis; peptidoglycan biosynthesis. In terms of biological role, cell wall formation. This is D-alanine--D-alanine ligase from Prochlorococcus marinus (strain MIT 9215).